Here is a 167-residue protein sequence, read N- to C-terminus: Small ribosomal subunit protein uS3m (167 aa).

A mitochondrion-targeting transit peptide spans 1 to 35 (MVALYCGGGLRPLMLSWSRDLPCIWRALHTSAVCF).

This sequence belongs to the universal ribosomal protein uS3 family. Component of the mitochondrial ribosome small subunit (28S) which comprises a 12S rRNA and about 30 distinct proteins.

The protein localises to the mitochondrion. This is Small ribosomal subunit protein uS3m (MRPS24) from Bos taurus (Bovine).